The chain runs to 223 residues: Putative archaetidylserine decarboxylase proenzyme (223 aa).

The active-site Schiff-base intermediate with substrate; via pyruvic acid is Ser-183. Residue Ser-183 is modified to Pyruvic acid (Ser); by autocatalysis.

Belongs to the phosphatidylserine decarboxylase family. PSD-A subfamily. As to quaternary structure, heterodimer of a large membrane-associated beta subunit and a small pyruvoyl-containing alpha subunit. Pyruvate serves as cofactor. In terms of processing, is synthesized initially as an inactive proenzyme. Formation of the active enzyme involves a self-maturation process in which the active site pyruvoyl group is generated from an internal serine residue via an autocatalytic post-translational modification. Two non-identical subunits are generated from the proenzyme in this reaction, and the pyruvate is formed at the N-terminus of the alpha chain, which is derived from the carboxyl end of the proenzyme. The post-translation cleavage follows an unusual pathway, termed non-hydrolytic serinolysis, in which the side chain hydroxyl group of the serine supplies its oxygen atom to form the C-terminus of the beta chain, while the remainder of the serine residue undergoes an oxidative deamination to produce ammonia and the pyruvoyl prosthetic group on the alpha chain.

It localises to the cell membrane. It carries out the reaction archaetidylserine + H(+) = archaetidylethanolamine + CO2. Functionally, catalyzes the formation of archaetidylethanolamine (PtdEtn) from archaetidylserine (PtdSer). In Methanothermobacter thermautotrophicus (strain ATCC 29096 / DSM 1053 / JCM 10044 / NBRC 100330 / Delta H) (Methanobacterium thermoautotrophicum), this protein is Putative archaetidylserine decarboxylase proenzyme.